The primary structure comprises 1128 residues: Major DNA-binding protein (1128 aa).

A required for nuclear localization region spans residues 1104–1128; it reads LGGGGQGSGGRRKRRLATVLPGLEV.

This sequence belongs to the herpesviridae major DNA-binding protein family. As to quaternary structure, homooligomers. Forms double-helical filaments necessary for the formation of replication compartments within the host nucleus. Interacts with the origin-binding protein. Interacts with the helicase primase complex; this interaction stimulates primer synthesis activity of the helicase-primase complex. Interacts with the DNA polymerase. Interacts with the alkaline exonuclease; this interaction increases its nuclease processivity.

The protein resides in the virion tegument. It is found in the host nucleus. Its function is as follows. Plays several crucial roles in viral infection. Participates in the opening of the viral DNA origin to initiate replication by interacting with the origin-binding protein. May disrupt loops, hairpins and other secondary structures present on ssDNA to reduce and eliminate pausing of viral DNA polymerase at specific sites during elongation. Promotes viral DNA recombination by performing strand-transfer, characterized by the ability to transfer a DNA strand from a linear duplex to a complementary single-stranded DNA circle. Can also catalyze the renaturation of complementary single strands. Additionally, reorganizes the host cell nucleus, leading to the formation of prereplicative sites and replication compartments. This process is driven by the protein which can form double-helical filaments in the absence of DNA. This Epstein-Barr virus (strain GD1) (HHV-4) protein is Major DNA-binding protein.